Consider the following 561-residue polypeptide: Dihydroxy-acid dehydratase (561 aa).

Mg(2+) is bound at residue D78. C119 is a binding site for [2Fe-2S] cluster. Positions 120 and 121 each coordinate Mg(2+). K121 is modified (N6-carboxylysine). Position 192 (C192) interacts with [2Fe-2S] cluster. Mg(2+) is bound at residue E448. The active-site Proton acceptor is the S474.

This sequence belongs to the IlvD/Edd family. Homodimer. It depends on [2Fe-2S] cluster as a cofactor. Mg(2+) serves as cofactor.

The enzyme catalyses (2R)-2,3-dihydroxy-3-methylbutanoate = 3-methyl-2-oxobutanoate + H2O. It carries out the reaction (2R,3R)-2,3-dihydroxy-3-methylpentanoate = (S)-3-methyl-2-oxopentanoate + H2O. The protein operates within amino-acid biosynthesis; L-isoleucine biosynthesis; L-isoleucine from 2-oxobutanoate: step 3/4. It participates in amino-acid biosynthesis; L-valine biosynthesis; L-valine from pyruvate: step 3/4. In terms of biological role, functions in the biosynthesis of branched-chain amino acids. Catalyzes the dehydration of (2R,3R)-2,3-dihydroxy-3-methylpentanoate (2,3-dihydroxy-3-methylvalerate) into 2-oxo-3-methylpentanoate (2-oxo-3-methylvalerate) and of (2R)-2,3-dihydroxy-3-methylbutanoate (2,3-dihydroxyisovalerate) into 2-oxo-3-methylbutanoate (2-oxoisovalerate), the penultimate precursor to L-isoleucine and L-valine, respectively. The polypeptide is Dihydroxy-acid dehydratase (Sulfurimonas denitrificans (strain ATCC 33889 / DSM 1251) (Thiomicrospira denitrificans (strain ATCC 33889 / DSM 1251))).